Reading from the N-terminus, the 324-residue chain is Elongation factor Ts, mitochondrial (324 aa).

Residues 1–44 (MSLLRSLRFFPVACTGRSARAVLLQPSQPWLTFHAGPSLSSAAS) constitute a mitochondrion transit peptide. Residues K75, K132, and K191 each carry the N6-succinyllysine modification. Phosphoserine is present on S269.

It belongs to the EF-Ts family.

Its subcellular location is the mitochondrion. Its function is as follows. Associates with the EF-Tu.GDP complex and induces the exchange of GDP to GTP. It remains bound to the aminoacyl-tRNA.EF-Tu.GTP complex up to the GTP hydrolysis stage on the ribosome. This is Elongation factor Ts, mitochondrial (Tsfm) from Mus musculus (Mouse).